The chain runs to 156 residues: Translation initiation factor IF-1, chloroplastic (156 aa).

The transit peptide at 1 to 81 (MASLSWWNPA…RRTTSIQCLS (81 aa)) directs the protein to the chloroplast. The interval 51–79 (KSLLVKTQQQSKKKKNNSTNSRRTTSIQC) is disordered. Over residues 67–76 (NSTNSRRTTS) the composition is skewed to low complexity. The region spanning 82–151 (QEQKWTHEGS…SKGRIIYRLR (70 aa)) is the S1-like domain.

It belongs to the IF-1 family. Component of the 30S ribosomal translation pre-initiation complex which assembles on the 30S ribosome in the order IF-2 and IF-3, IF-1 and N-formylmethionyl-tRNA(fMet); mRNA recruitment can occur at any time during PIC assembly.

The protein resides in the plastid. It localises to the chloroplast. Functionally, one of the essential components for the initiation of protein synthesis. Stabilizes the binding of IF-2 and IF-3 on the 30S subunit to which N-formylmethionyl-tRNA(fMet) subsequently binds. Helps modulate mRNA selection, yielding the 30S pre-initiation complex (PIC). Upon addition of the 50S ribosomal subunit IF-1, IF-2 and IF-3 are released leaving the mature 70S translation initiation complex. The polypeptide is Translation initiation factor IF-1, chloroplastic (infA) (Solanum lycopersicum (Tomato)).